We begin with the raw amino-acid sequence, 213 residues long: LexA repressor (213 aa).

The H-T-H motif DNA-binding region spans 29–49 (VREICNAVGFKSTSTVHSYLE). Catalysis depends on for autocatalytic cleavage activity residues Ser136 and Lys173.

The protein belongs to the peptidase S24 family. As to quaternary structure, homodimer.

It catalyses the reaction Hydrolysis of Ala-|-Gly bond in repressor LexA.. Functionally, represses a number of genes involved in the response to DNA damage (SOS response), including recA and lexA. In the presence of single-stranded DNA, RecA interacts with LexA causing an autocatalytic cleavage which disrupts the DNA-binding part of LexA, leading to derepression of the SOS regulon and eventually DNA repair. The protein is LexA repressor of Acetivibrio thermocellus (strain ATCC 27405 / DSM 1237 / JCM 9322 / NBRC 103400 / NCIMB 10682 / NRRL B-4536 / VPI 7372) (Clostridium thermocellum).